The following is a 131-amino-acid chain: Sperm microtubule inner protein 11 (131 aa).

The disordered stretch occupies residues 18-44; the sequence is KKRNTTEETNQKEPEPTRLPPIISKDG. A compositionally biased stretch (basic and acidic residues) spans 21 to 33; sequence NTTEETNQKEPEP.

In terms of assembly, microtubule inner protein component of sperm flagellar doublet microtubules.

It localises to the cytoplasm. The protein localises to the cytoskeleton. The protein resides in the flagellum axoneme. Functionally, microtubule inner protein (MIP) part of the dynein-decorated doublet microtubules (DMTs) in flagellum axoneme. May serve to reinforce and thus stabilize the microtubule structure in the sperm flagella. This is Sperm microtubule inner protein 11 from Homo sapiens (Human).